Consider the following 302-residue polypeptide: Genetic interactor of prohibitin 7, mitochondrial (302 aa).

The N-terminal 21 residues, 1–21, are a transit peptide targeting the mitochondrion; it reads MLSQYLRKHHLLSRRHQFMRC. Positions 20–44 are disordered; that stretch reads RCASQSRSPPRSLLQRQAKRRGEAE. The helical transmembrane segment at 236 to 253 threads the bilayer; it reads GTRIIAWLGILIVMIASV. The tract at residues 264 to 290 is disordered; that stretch reads ATVKVSEFTEQETSEPQAAQQDTAPIS. The span at 277–290 shows a compositional bias: polar residues; sequence SEPQAAQQDTAPIS.

The protein belongs to the GEP7 family.

The protein localises to the mitochondrion membrane. Functionally, involved in respiratory growth and required for cell survival in the absence of prohibitins. The polypeptide is Genetic interactor of prohibitin 7, mitochondrial (GEP7) (Lachancea thermotolerans (strain ATCC 56472 / CBS 6340 / NRRL Y-8284) (Yeast)).